The following is a 297-amino-acid chain: MPIKETDKEVVLTHPADETTSVHILKYGATVYSWKLKSEEQLWLSTAAKLDGSKPVRGGIPLVFPVFGKNSTDEHLSKLPQHGLARNSTWEFLGQTKENPPTVQFGLKPEIANPELTKLWPMDYLLILTVELGSDYLKTAIEVENTSSSKELKFNWLFHTYFRIEDIEGTMVSNLAGMKLYDQLLKESYVDKHPVVTFNQETDVIYQNVSAERAIQIVDKGVQIHTLKRYNLPDTVVWNPWIEKSQGMADFEPKTGYQQMICIEPGHVHDFISLAPGKKWNAYQLLCKEELKYQAIQ.

Substrate-binding residues include Arg57, Gln81, and Arg86. Ser88 bears the Phosphoserine mark. Residue His159 is part of the active site. Asp203 serves as a coordination point for substrate. The active site involves Glu264.

Belongs to the glucose-6-phosphate 1-epimerase family.

It carries out the reaction alpha-D-glucose 6-phosphate = beta-D-glucose 6-phosphate. Its function is as follows. Catalyzes the interconversion between the alpha and beta anomers from at least three hexose 6-phosphate sugars (Glc6P, Gal6P, and Man6P). The protein is Glucose-6-phosphate 1-epimerase of Saccharomyces cerevisiae (strain ATCC 204508 / S288c) (Baker's yeast).